The chain runs to 217 residues: Ribulose-phosphate 3-epimerase (217 aa).

Ser6 is a binding site for substrate. A divalent metal cation contacts are provided by His29, Asp31, and His62. Asp31 functions as the Proton acceptor in the catalytic mechanism. Substrate contacts are provided by residues His62, 138–141, 171–173, and 193–194; these read GFGG, DGG, and GS. Asp171 contacts a divalent metal cation. Asp171 functions as the Proton donor in the catalytic mechanism.

Belongs to the ribulose-phosphate 3-epimerase family. The cofactor is a divalent metal cation.

It carries out the reaction D-ribulose 5-phosphate = D-xylulose 5-phosphate. The protein operates within carbohydrate degradation. Functionally, catalyzes the reversible epimerization of D-ribulose 5-phosphate to D-xylulose 5-phosphate. The protein is Ribulose-phosphate 3-epimerase of Helicobacter pylori (strain J99 / ATCC 700824) (Campylobacter pylori J99).